Consider the following 468-residue polypeptide: 3-isopropylmalate dehydratase large subunit (468 aa).

A disordered region spans residues glutamine 53 to glycine 74. The [4Fe-4S] cluster site is built by cysteine 347, cysteine 407, and cysteine 410.

It belongs to the aconitase/IPM isomerase family. LeuC type 1 subfamily. In terms of assembly, heterodimer of LeuC and LeuD. [4Fe-4S] cluster is required as a cofactor.

The enzyme catalyses (2R,3S)-3-isopropylmalate = (2S)-2-isopropylmalate. Its pathway is amino-acid biosynthesis; L-leucine biosynthesis; L-leucine from 3-methyl-2-oxobutanoate: step 2/4. Its function is as follows. Catalyzes the isomerization between 2-isopropylmalate and 3-isopropylmalate, via the formation of 2-isopropylmaleate. In Pasteurella multocida (strain Pm70), this protein is 3-isopropylmalate dehydratase large subunit.